The sequence spans 45 residues: Large ribosomal subunit protein bL34 (45 aa).

Residues R22 to V45 are disordered. Residues K33 to V45 show a composition bias toward basic residues.

This sequence belongs to the bacterial ribosomal protein bL34 family.

The polypeptide is Large ribosomal subunit protein bL34 (Thermosynechococcus vestitus (strain NIES-2133 / IAM M-273 / BP-1)).